The primary structure comprises 447 residues: Argininosuccinate synthase (447 aa).

Residues 17-25 and Ala43 contribute to the ATP site; that span reads AFSGGLDTS. Tyr99 provides a ligand contact to L-citrulline. ATP is bound by residues Gly129 and Thr131. The L-aspartate site is built by Thr131, Asn135, and Asp136. Asn135 is an L-citrulline binding site. Asp136 serves as a coordination point for ATP. The L-citrulline site is built by Arg139 and Ser192. Position 194 (Asp194) interacts with ATP. The L-citrulline site is built by Thr201, Glu203, and Glu280.

This sequence belongs to the argininosuccinate synthase family. Type 2 subfamily. As to quaternary structure, homotetramer.

The protein localises to the cytoplasm. The enzyme catalyses L-citrulline + L-aspartate + ATP = 2-(N(omega)-L-arginino)succinate + AMP + diphosphate + H(+). It functions in the pathway amino-acid biosynthesis; L-arginine biosynthesis; L-arginine from L-ornithine and carbamoyl phosphate: step 2/3. The protein is Argininosuccinate synthase of Escherichia coli O1:K1 / APEC.